The chain runs to 174 residues: Anthrone oxygenase CPUR_05435 (174 aa).

The next 4 membrane-spanning stretches (helical) occupy residues 13-33, 56-76, 88-108, and 140-160; these read VALASGVFLSGAMFSVSAIMI, YGSVLMPSMSVAIAAVYGFAS, CLAAGALTLAIAPYTWLAMIP, and WVVLHSIRSILPLAGAIMGFT.

Belongs to the anthrone oxygenase family.

Its subcellular location is the membrane. It catalyses the reaction emodin anthrone + O2 = emodin + H2O + H(+). In terms of biological role, anthrone oxygenase; part of the ergochrome gene cluster responsible for the typical purple-black color of the ergot sclerotia. The ergochrome gene cluster produces several ergot pigments including the yellow ergochrome secalonic acid and its derivatives, as well as the red anthraquinones endocrocin and clavorubin. The pathway begins with the synthesis of atrochrysone thioester by the polyketide synthase (PKS) CPUR_05437. The atrochrysone carboxyl ACP thioesterase CPUR_05436 then breaks the thioester bond and releases the atrochrysone carboxylic acid from CPUR_05437. The decarboxylase CPUR_05434 then catalyzes the concerted decarboxylation-elimination required to convert atochrysone carboxylic acid into emodin anthrone, which is further oxidized to emodin by the anthrone oxygenase CPUR_05435. Emodin is further modified to yield monodictyphenone via several steps involving CPUR_05427, CPUR_05428, CPUR_05429 and CPUR_05430. The short chain dehydrogenase/reductase CPUR_05418 then catalyzes the C-5 ketoreduction to give the xanthone skeleton of the monomeric units. Ergochromes formation requires further dimerization steps of different xanthone units, probably catalyzed by the cytochrome P450 monooxygenase CPUR_05419. CPUR_05425, CPUR_05426 and CPUR_05431 are unique to Claviceps, thus it is likely that they are involved in further modification of xanthone units or in their dimerization. The yellow ergochromes and the red anthraquinone pigments endocrocin and clavorubin are products from the same PKS derived precursors and the latter are likely shunt products in the pathway of xanthone biosynthesis. It is proposed that atrochrysone carboxylic acid released from the PKS CPUR_05437 can also be converted to endocrocin anthrone which is further oxidized into endocrocin by CPUR_05435. Endocrocin could be then modified to clavorubin, possibly by CPUR_05423 and CPUR_05431. Clavorubin is the principal anthraquinone metabolite produced by the cluster with a much higher yield compared to endocrocin. The chain is Anthrone oxygenase CPUR_05435 from Claviceps purpurea (strain 20.1) (Ergot fungus).